The primary structure comprises 602 residues: Elongation factor 4 (602 aa).

Positions 7-196 (SKIRNFCIIA…HPQNEIKSPT (190 aa)) constitute a tr-type G domain. Residues 19 to 24 (DHGKST) and 136 to 139 (NKVD) contribute to the GTP site.

This sequence belongs to the TRAFAC class translation factor GTPase superfamily. Classic translation factor GTPase family. LepA subfamily.

It is found in the cell inner membrane. It carries out the reaction GTP + H2O = GDP + phosphate + H(+). Its function is as follows. Required for accurate and efficient protein synthesis under certain stress conditions. May act as a fidelity factor of the translation reaction, by catalyzing a one-codon backward translocation of tRNAs on improperly translocated ribosomes. Back-translocation proceeds from a post-translocation (POST) complex to a pre-translocation (PRE) complex, thus giving elongation factor G a second chance to translocate the tRNAs correctly. Binds to ribosomes in a GTP-dependent manner. The sequence is that of Elongation factor 4 from Prochlorococcus marinus (strain MIT 9515).